Consider the following 353-residue polypeptide: MLARAARGTGALLLRGSVQASGRVPRRASSGLPRNTVILFVPQQEAWVVERMGRFHRILEPGLNVLIPVLDRIRYVQSLKEIVINVPEQSAVTLDNVTLQIDGVLYLRIMDPYKASYGVEDPEYAVTQLAQTTMRSELGKLSLDKVFRERESLNANIVDAINQAADCWGIRCLRYEIKDIHVPPRVKESMQMQVEAERRKRATVLESEGTRESAINVAEGKKQAQILASEAEKAEQINQAAGEASAVLAKAKAKAEAIRILAGALTQHNGDAAASLTVAEQYVSAFSKLAKDSNTVLLPSNPSDVTSMVAQAMGVYGALTKAPVPGAQNSSQSRRDVQATDTSIEELGRVKLS.

The transit peptide at 1-28 (MLARAARGTGALLLRGSVQASGRVPRRA) directs the protein to the mitochondrion. Residue serine 17 is modified to Phosphoserine; by PKC/PRKCZ. Tyrosine 124 is modified (phosphotyrosine). N6-acetyllysine; alternate is present on lysine 145. N6-succinyllysine; alternate is present on lysine 145. Residues 215 to 252 (INVAEGKKQAQILASEAEKAEQINQAAGEASAVLAKAK) adopt a coiled-coil conformation. Lysine 233 carries the post-translational modification N6-acetyllysine. The tract at residues 324 to 353 (VPGAQNSSQSRRDVQATDTSIEELGRVKLS) is disordered. Phosphoserine is present on serine 330.

Belongs to the band 7/mec-2 family. In terms of assembly, forms homooligomers. Interacts with MFN2; may form heterooligomers. Interacts with PHB1 and PHB2; recruits them to cardiolipin-enriched mitochondrial membranes and stabilizes them. Interacts with CACNA2D2.

The protein localises to the cell membrane. The protein resides in the mitochondrion. Its subcellular location is the mitochondrion inner membrane. It is found in the mitochondrion intermembrane space. It localises to the membrane raft. The protein localises to the cytoplasm. The protein resides in the cytoskeleton. Its function is as follows. Mitochondrial protein that probably regulates the biogenesis and the activity of mitochondria. Stimulates cardiolipin biosynthesis, binds cardiolipin-enriched membranes where it recruits and stabilizes some proteins including prohibitin and may therefore act in the organization of functional microdomains in mitochondrial membranes. Through regulation of the mitochondrial function may play a role into several biological processes including cell migration, cell proliferation, T-cell activation, calcium homeostasis and cellular response to stress. May play a role in calcium homeostasis through negative regulation of calcium efflux from mitochondria. Required for mitochondrial hyperfusion a pro-survival cellular response to stress which results in increased ATP production by mitochondria. May also regulate the organization of functional domains at the plasma membrane and play a role in T-cell activation through association with the T-cell receptor signaling complex and its regulation. The sequence is that of Stomatin-like protein 2, mitochondrial (Stoml2) from Mus musculus (Mouse).